The sequence spans 155 residues: Small ribosomal subunit protein uS9 (155 aa).

It belongs to the universal ribosomal protein uS9 family.

The sequence is that of Small ribosomal subunit protein uS9 from Sinorhizobium fredii (strain NBRC 101917 / NGR234).